Here is a 235-residue protein sequence, read N- to C-terminus: Proteasome subunit alpha (235 aa).

The protein belongs to the peptidase T1A family. The 20S proteasome core is composed of 14 alpha and 14 beta subunits that assemble into four stacked heptameric rings, resulting in a barrel-shaped structure. The two inner rings, each composed of seven catalytic beta subunits, are sandwiched by two outer rings, each composed of seven alpha subunits. The catalytic chamber with the active sites is on the inside of the barrel. Has a gated structure, the ends of the cylinder being occluded by the N-termini of the alpha-subunits. Is capped by the proteasome-associated ATPase, ARC.

It is found in the cytoplasm. Its pathway is protein degradation; proteasomal Pup-dependent pathway. The formation of the proteasomal ATPase ARC-20S proteasome complex, likely via the docking of the C-termini of ARC into the intersubunit pockets in the alpha-rings, may trigger opening of the gate for substrate entry. Interconversion between the open-gate and close-gate conformations leads to a dynamic regulation of the 20S proteasome proteolysis activity. Component of the proteasome core, a large protease complex with broad specificity involved in protein degradation. The polypeptide is Proteasome subunit alpha (Arthrobacter sp. (strain FB24)).